Reading from the N-terminus, the 815-residue chain is MRQIIDYDCNFKEEVGEVLKDISTSQNTLGFNVISILGCQSTGKSTLLNALFDTHFKVLDKLTSGYCQTTKGLWLGCGTESFNSPILIWDVEGTDSLERGEDRATFENRAALFSLAVSDCMILNIPLMNLTTYSSSNFGLLKTILNSWFSLKLDQNGITRGNIRKTTLLFAVRDITINDNDEMLGRKVVQILDLLWRQVAESQNSLGNQIPASFSDIFEVKVYGIPSLPNDYDGFKQVVAAIRYDLTTSILPKDYTRRIPLEGLEMYCKTVWKCIVDCQELNIPSQIKLVSRFRCEQAKDDILDGYKKSIKDLQKKMEKREFGFNEFSDCTLLVLENSLAAYFEVASKYDHEMSTNSSISLLVFIFHEFQNAVNSRMSLERQDLRQYTNILDYYKKGIEDHQVQYDKENNEESHYVSFDSSSWVNKELLKFDSLSLKWKTEFPSVISRQHLISPIKEKCIPDILNEISLSSQGKEVFLATYNTQEQRKLLSETLEIHSKKIYEKLVEEFFESLIKDILKEISPLLGDHFLSDPKLKLDDFWELTGSSIVNIHRLLVSKYEQQWITLFKNSNMNEFTSSGLEEEIALQLVLKFIQLIQQQSKYFHINIVDRFKNEFELDQDGVPRQWIGEDAKTMKELFIKAKNNSLQITNVFYPRKDQLIPLSGRFSNLFDKIIENSEDLSGIIALNKGHGNGKFLDSVPLISESNLKEIESKASQEITSIFSKAQLIQSTGRQPQNIPWWIYLLIIILGFDEITYVLTSPVLVTLLLLLASFIYSYLTGNFSSFCNYSQQFVIISTKILHYISGAIHSSLDNRK.

Over 1 to 737 (MRQIIDYDCN…IQSTGRQPQN (737 aa)) the chain is Cytoplasmic. The 233-residue stretch at 28-260 (TLGFNVISIL…LPKDYTRRIP (233 aa)) folds into the GB1/RHD3-type G domain. Residue 38–45 (GCQSTGKS) coordinates GTP. Residues 298–321 (AKDDILDGYKKSIKDLQKKMEKRE) adopt a coiled-coil conformation. The chain crosses the membrane as a helical span at residues 738–758 (IPWWIYLLIIILGFDEITYVL). Topologically, residues 759–761 (TSP) are lumenal. The helical transmembrane segment at 762–782 (VLVTLLLLLASFIYSYLTGNF) threads the bilayer. Over 783-815 (SSFCNYSQQFVIISTKILHYISGAIHSSLDNRK) the chain is Cytoplasmic.

The protein belongs to the TRAFAC class dynamin-like GTPase superfamily. GB1/RHD3 GTPase family. RHD3 subfamily.

It is found in the endoplasmic reticulum membrane. In terms of biological role, probable GTP-binding protein that may be involved in cell development. In Cryptosporidium hominis, this protein is Protein SEY1 homolog.